Reading from the N-terminus, the 297-residue chain is Nicotinate-nucleotide pyrophosphorylase [carboxylating] (297 aa).

A Blocked amino end (Pro) modification is found at Pro2. Substrate-binding positions include Arg119, 152–154 (TRK), Arg176, Lys186, Glu215, Asp236, 259–261 (SGN), and 280–282 (VGA).

Belongs to the NadC/ModD family. In terms of assembly, hexamer formed by 3 homodimers. Homodimer.

The enzyme catalyses nicotinate beta-D-ribonucleotide + CO2 + diphosphate = quinolinate + 5-phospho-alpha-D-ribose 1-diphosphate + 2 H(+). The protein operates within cofactor biosynthesis; NAD(+) biosynthesis; nicotinate D-ribonucleotide from quinolinate: step 1/1. Involved in the catabolism of quinolinic acid (QA). This Salmonella typhimurium (strain LT2 / SGSC1412 / ATCC 700720) protein is Nicotinate-nucleotide pyrophosphorylase [carboxylating] (nadC).